The chain runs to 356 residues: Glycerol-3-phosphate dehydrogenase [NAD(P)+] (356 aa).

Positions 12, 32, 33, and 117 each coordinate NADPH. Sn-glycerol 3-phosphate is bound by residues Lys117, Gly151, and Ser153. Ala155 contributes to the NADPH binding site. Sn-glycerol 3-phosphate-binding residues include Lys206, Asp265, Arg276, and Asn277. Lys206 acts as the Proton acceptor in catalysis. Arg276 is an NADPH binding site. NADPH is bound by residues Leu309 and Glu311.

The protein belongs to the NAD-dependent glycerol-3-phosphate dehydrogenase family.

It localises to the cytoplasm. It carries out the reaction sn-glycerol 3-phosphate + NAD(+) = dihydroxyacetone phosphate + NADH + H(+). The catalysed reaction is sn-glycerol 3-phosphate + NADP(+) = dihydroxyacetone phosphate + NADPH + H(+). Its pathway is membrane lipid metabolism; glycerophospholipid metabolism. Its function is as follows. Catalyzes the reduction of the glycolytic intermediate dihydroxyacetone phosphate (DHAP) to sn-glycerol 3-phosphate (G3P), the key precursor for phospholipid synthesis. This is Glycerol-3-phosphate dehydrogenase [NAD(P)+] from Treponema pallidum (strain Nichols).